The following is a 669-amino-acid chain: Zeaxanthin epoxidase, chloroplastic (669 aa).

The N-terminal 49 residues, 1-49, are a transit peptide targeting the chloroplast; sequence MYSTVFYTSVHPSTSVLSRKQLPLLISKDFSAELYHSLPCRSLENGHIN. FAD is bound by residues 87–115 and 365–378; these read KVLVAGGGIGGLVFALAAKKRGFDVLVFE and TFSWGRGRVTLLGD. The FHA domain occupies 553–617; the sequence is IVLSRDEDVP…HGTWVTDNEG (65 aa).

FAD serves as cofactor.

The protein resides in the plastid. The protein localises to the chloroplast. It carries out the reaction all-trans-zeaxanthin + 4 reduced [2Fe-2S]-[ferredoxin] + 2 O2 + 4 H(+) = all-trans-violaxanthin + 4 oxidized [2Fe-2S]-[ferredoxin] + 2 H2O. Its pathway is plant hormone biosynthesis; abscisate biosynthesis. In terms of biological role, converts zeaxanthin into antheraxanthin and subsequently violaxanthin. Involved in the epoxidation of zeaxanthin. Plays an important role in resistance to stresses, seed development and dormancy. This chain is Zeaxanthin epoxidase, chloroplastic, found in Solanum lycopersicum (Tomato).